Reading from the N-terminus, the 30-residue chain is Phospholemman-like protein (30 aa).

This sequence belongs to the FXYD family. Post-translationally, phosphorylated by protein kinase a (PK-A) and protein kinase C (PK-C). Phosphorylated in response to insulin and adrenergic stimulation.

It is found in the microsome membrane. The protein localises to the endoplasmic reticulum membrane. Its function is as follows. Induces a hyperpolarization-activated chloride current when expressed in Xenopus oocytes. May have a functional role in muscle contraction. The chain is Phospholemman-like protein from Squalus acanthias (Spiny dogfish).